Reading from the N-terminus, the 500-residue chain is NAD(P)H-quinone oxidoreductase chain 4, chloroplastic (500 aa).

Transmembrane regions (helical) follow at residues 4 to 24 (FPWL…IFFL), 37 to 57 (IFIC…HFQL), 87 to 107 (IGPI…AWPV), 113 to 130 (LFHF…GSFS), 134 to 154 (LLLF…LLSM), 167 to 187 (FILY…GIGL), 208 to 228 (ALEI…SPII), 242 to 262 (HYST…YGLV), 272 to 292 (AHSI…IYAA), 305 to 325 (IAYS…SITD), 330 to 350 (GAIL…FLAG), 386 to 406 (LALP…GIIT), 416 to 436 (ILIT…SLSM), and 462 to 482 (LFVL…PDFV).

It belongs to the complex I subunit 4 family.

It is found in the plastid. Its subcellular location is the chloroplast thylakoid membrane. The catalysed reaction is a plastoquinone + NADH + (n+1) H(+)(in) = a plastoquinol + NAD(+) + n H(+)(out). It carries out the reaction a plastoquinone + NADPH + (n+1) H(+)(in) = a plastoquinol + NADP(+) + n H(+)(out). In Vitis vinifera (Grape), this protein is NAD(P)H-quinone oxidoreductase chain 4, chloroplastic.